A 113-amino-acid chain; its full sequence is Tubulin alpha chain (113 aa).

E52 is a binding site for GTP. E52 contributes to the Mg(2+) binding site.

This sequence belongs to the tubulin family. In terms of assembly, dimer of alpha and beta chains. A typical microtubule is a hollow water-filled tube with an outer diameter of 25 nm and an inner diameter of 15 nM. Alpha-beta heterodimers associate head-to-tail to form protofilaments running lengthwise along the microtubule wall with the beta-tubulin subunit facing the microtubule plus end conferring a structural polarity. Microtubules usually have 13 protofilaments but different protofilament numbers can be found in some organisms and specialized cells. Requires Mg(2+) as cofactor.

Its subcellular location is the cytoplasm. The protein localises to the cytoskeleton. The enzyme catalyses GTP + H2O = GDP + phosphate + H(+). Tubulin is the major constituent of microtubules, a cylinder consisting of laterally associated linear protofilaments composed of alpha- and beta-tubulin heterodimers. Microtubules grow by the addition of GTP-tubulin dimers to the microtubule end, where a stabilizing cap forms. Below the cap, tubulin dimers are in GDP-bound state, owing to GTPase activity of alpha-tubulin. The protein is Tubulin alpha chain (TUBA) of Picea abies (Norway spruce).